The sequence spans 128 residues: Gastrotropin (128 aa).

Alanine 2 is modified (N-acetylalanine).

This sequence belongs to the calycin superfamily. Fatty-acid binding protein (FABP) family. Expressed in ovary granulosa and luteal cells.

The protein localises to the cytoplasm. It localises to the membrane. Functionally, binds to bile acids and is involved in enterohepatic bile acid metabolism. Required for efficient apical to basolateral transport of conjugated bile acids in ileal enterocytes. Stimulates gastric acid and pepsinogen secretion. This is Gastrotropin (Fabp6) from Mus musculus (Mouse).